A 396-amino-acid polypeptide reads, in one-letter code: Phosphoglycerate kinase (396 aa).

Substrate-binding positions include 22 to 24 (DLN), R37, 60 to 63 (HFGR), R118, and R151. ATP-binding positions include K201, E323, and 353–356 (GGDT).

It belongs to the phosphoglycerate kinase family. Monomer.

The protein localises to the cytoplasm. The enzyme catalyses (2R)-3-phosphoglycerate + ATP = (2R)-3-phospho-glyceroyl phosphate + ADP. It participates in carbohydrate degradation; glycolysis; pyruvate from D-glyceraldehyde 3-phosphate: step 2/5. This is Phosphoglycerate kinase from Azorhizobium caulinodans (strain ATCC 43989 / DSM 5975 / JCM 20966 / LMG 6465 / NBRC 14845 / NCIMB 13405 / ORS 571).